Here is a 79-residue protein sequence, read N- to C-terminus: Small ribosomal subunit protein bS18 (79 aa).

It belongs to the bacterial ribosomal protein bS18 family. Part of the 30S ribosomal subunit. Forms a tight heterodimer with protein bS6.

In terms of biological role, binds as a heterodimer with protein bS6 to the central domain of the 16S rRNA, where it helps stabilize the platform of the 30S subunit. The sequence is that of Small ribosomal subunit protein bS18 from Bradyrhizobium diazoefficiens (strain JCM 10833 / BCRC 13528 / IAM 13628 / NBRC 14792 / USDA 110).